We begin with the raw amino-acid sequence, 561 residues long: MRYLELAQLYQKLEKTTMKLIKTRLVADFLKKVPDDHLEFIPYLILGEVFPEWDERELGVGEKLLIKAVAMATGIDAKEIEESVKDTGDLGESIALAVKKKKQKSFFSQPLTIKRVYQTLVKVAETTGEGSQDKKVKYLADLFMDAEPLEAKYLARTILGTMRTGVAEGLLRDAIAMAFHVKVELVERAYMLTSDFGYVAKIAKLEGNEGLAKVQVQLGKPIKPMLAQQAASIRDALLEMGGEAEFEIKYDGARVQVHKDGSKIIVYSRRLENVTRAIPEIVEALKEAIIPEKAIVEGELVAIGENGRPLPFQYVLRRFRRKHNIEEMMEKIPLELNLFDVLYVDGQSLIDTKFIDRRRTLEEIIKQNEKIKVAENLITKKVEEAEAFYKRALEMGHEGLMAKRLDAVYEPGNRGKKWLKIKPTMENLDLVIIGAEWGEGRRAHLFGSFILGAYDPETGEFLEVGKVGSGFTDDDLVEFTKMLKPLIIKEEGKRVWLQPKVVIEVTYQEIQKSPKYRSGFALRFPRFVALRDDKGPEDADTIERIAQLYELQEKMKGKVES.

Glu247 lines the ATP pocket. The active-site N6-AMP-lysine intermediate is the Lys249. Residues Arg254, Arg269, Glu299, Phe339, Arg414, and Lys420 each contribute to the ATP site.

This sequence belongs to the ATP-dependent DNA ligase family. In terms of assembly, monomer. The cofactor is Mg(2+).

It carries out the reaction ATP + (deoxyribonucleotide)n-3'-hydroxyl + 5'-phospho-(deoxyribonucleotide)m = (deoxyribonucleotide)n+m + AMP + diphosphate.. DNA ligase that seals nicks in double-stranded DNA during DNA replication, DNA recombination and DNA repair. The protein is DNA ligase of Pyrococcus furiosus (strain ATCC 43587 / DSM 3638 / JCM 8422 / Vc1).